The chain runs to 177 residues: Interleukin-1 receptor antagonist protein (177 aa).

Residues 1–25 form the signal peptide; sequence MEICRGLRSHLITLLLFLFHSETIC. A disulfide bridge connects residues cysteine 91 and cysteine 141. Residue asparagine 109 is glycosylated (N-linked (GlcNAc...) asparagine).

Belongs to the IL-1 family. As to expression, the intracellular form of IL1RN is predominantly expressed in epithelial cells.

It localises to the secreted. It is found in the cytoplasm. Anti-inflammatory antagonist of interleukin-1 family of proinflammatory cytokines such as interleukin-1beta/IL1B and interleukin-1alpha/IL1A. Protects from immune dysregulation and uncontrolled systemic inflammation triggered by IL1 for a range of innate stimulatory agents such as pathogens. The chain is Interleukin-1 receptor antagonist protein (IL1RN) from Homo sapiens (Human).